Consider the following 547-residue polypeptide: Inositol-tetrakisphosphate 1-kinase 6 (547 aa).

Residue K263 coordinates 1D-myo-inositol 1,3,4-trisphosphate. ATP contacts are provided by R317 and K370. Residues 327–539 (LEGLSAEGRP…FWDAIKQSYE (213 aa)) enclose the ATP-grasp domain. 1D-myo-inositol 1,3,4-trisphosphate-binding residues include H381 and K415. Residues 404–415 (QEYIDHGSKIFK), S430, and S450 each bind ATP. Residues D497, D511, and N513 each coordinate Mg(2+). Residues N513 and S517 each coordinate 1D-myo-inositol 1,3,4-trisphosphate.

The protein belongs to the ITPK1 family. In terms of assembly, monomer. It depends on Mg(2+) as a cofactor. Highly expressed in embryos and at lower levels in roots, leaves, flowers and anthers.

It carries out the reaction 1D-myo-inositol 3,4,5,6-tetrakisphosphate + ATP = 1D-myo-inositol 1,3,4,5,6-pentakisphosphate + ADP + H(+). The enzyme catalyses 1D-myo-inositol 1,3,4-trisphosphate + ATP = 1D-myo-inositol 1,3,4,5-tetrakisphosphate + ADP + H(+). The catalysed reaction is 1D-myo-inositol 1,3,4-trisphosphate + ATP = 1D-myo-inositol 1,3,4,6-tetrakisphosphate + ADP + H(+). Functionally, kinase that can phosphorylate various inositol polyphosphate such as Ins(3,4,5,6)P4 or Ins(1,3,4)P3 and participates in phytic acid biosynthesis in developing seeds. Phytic acid is the primary storage form of phosphorus in cereal grains and other plant seeds. In Oryza sativa subsp. japonica (Rice), this protein is Inositol-tetrakisphosphate 1-kinase 6 (ITPK6).